Consider the following 406-residue polypeptide: Cysteine desulfurase (406 aa).

Lysine 226 is modified (N6-(pyridoxal phosphate)lysine). Catalysis depends on cysteine 364, which acts as the Cysteine persulfide intermediate.

This sequence belongs to the class-V pyridoxal-phosphate-dependent aminotransferase family. Csd subfamily. As to quaternary structure, homodimer. Interacts with SufE and the SufBCD complex composed of SufB, SufC and SufD. The interaction with SufE is required to mediate the direct transfer of the sulfur atom from the S-sulfanylcysteine. The cofactor is pyridoxal 5'-phosphate.

The protein localises to the cytoplasm. It carries out the reaction (sulfur carrier)-H + L-cysteine = (sulfur carrier)-SH + L-alanine. The enzyme catalyses L-selenocysteine + AH2 = hydrogenselenide + L-alanine + A + H(+). It functions in the pathway cofactor biosynthesis; iron-sulfur cluster biosynthesis. Its function is as follows. Cysteine desulfurases mobilize the sulfur from L-cysteine to yield L-alanine, an essential step in sulfur metabolism for biosynthesis of a variety of sulfur-containing biomolecules. Component of the suf operon, which is activated and required under specific conditions such as oxidative stress and iron limitation. Acts as a potent selenocysteine lyase in vitro, that mobilizes selenium from L-selenocysteine. Selenocysteine lyase activity is however unsure in vivo. The polypeptide is Cysteine desulfurase (Escherichia coli O8 (strain IAI1)).